The following is a 327-amino-acid chain: Flotillin-like protein FloA (327 aa).

A helical membrane pass occupies residues 2–22; the sequence is IGLIIIVVIVLVALLLLFSFV. Residues 305–327 are disordered; it reads ADTGMRNSINQRTNQKDDESPDK. A compositionally biased stretch (basic and acidic residues) spans 318-327; sequence NQKDDESPDK.

Belongs to the flotillin-like FloA family. In terms of assembly, homooligomerizes.

The protein resides in the cell membrane. It is found in the membrane raft. Found in functional membrane microdomains (FMM) that may be equivalent to eukaryotic membrane rafts. FMMs are highly dynamic and increase in number as cells age. Flotillins are thought to be important factors in membrane fluidity. The chain is Flotillin-like protein FloA from Staphylococcus saprophyticus subsp. saprophyticus (strain ATCC 15305 / DSM 20229 / NCIMB 8711 / NCTC 7292 / S-41).